The following is a 188-amino-acid chain: MASYSTNEFRSGLKIMLDGEPCAIIENEFVKPGKGQAFNRVRLRKLVSGKVLEKTFKSGDSVEAADVMDINLTYLYNDGEFWHFMNNENFEQLAADAKVVGDNAKWLVEQAECVLTLWNGQPIAVTPPNFVELEITETDPGLKGDTAGTGGKPATLTTGAVVKVPLFVQIGEVIKVDTRSGDYVSRVK.

Lysine 34 bears the N6-(3,6-diaminohexanoyl)-5-hydroxylysine mark.

This sequence belongs to the elongation factor P family. May be beta-lysylated on the epsilon-amino group of Lys-34 by the combined action of EpmA and EpmB, and then hydroxylated on the C5 position of the same residue by EpmC (if this protein is present). Lysylation is critical for the stimulatory effect of EF-P on peptide-bond formation. The lysylation moiety may extend toward the peptidyltransferase center and stabilize the terminal 3-CCA end of the tRNA. Hydroxylation of the C5 position on Lys-34 may allow additional potential stabilizing hydrogen-bond interactions with the P-tRNA.

It localises to the cytoplasm. It participates in protein biosynthesis; polypeptide chain elongation. Its function is as follows. Involved in peptide bond synthesis. Alleviates ribosome stalling that occurs when 3 or more consecutive Pro residues or the sequence PPG is present in a protein, possibly by augmenting the peptidyl transferase activity of the ribosome. Modification of Lys-34 is required for alleviation. The polypeptide is Elongation factor P (Sodalis glossinidius (strain morsitans)).